We begin with the raw amino-acid sequence, 599 residues long: MFNKFNTKPLWEVSKTLSSVAQGFEPADMVIINSRLINVCTREVIENTDVAISCGRIALVGDAKHCIGESTEVIDAKGQYIAPGFLDGHIHVESSMLSVSEYARSVVPHGTVGIYMDPHEICNVLGLNGVRYMIEDGKGTPLKNMVTTPSCVPAVPGFEDTGAAVGPEDVRETMKWDEIVGLGEMMNFPGILYSTDHAHGVVGETLKASKTVTGHYSLPETGKGLNGYIASGVRCCHESTRAEDALAKMRLGMYAMFREGSAWHDLKEVSKAITENKVDSRFAVLISDDTHPHTLLKDGHLDHIIKRAIEEGIEPLTAIQMVTINCAQCFQMDHELGSITPGKCADIVLIEDLKDVKITKVIIDGNLVAKDGVLTTSIAKYDYPEDAMHSMHIKDKITPASFNIMAQNKEKVTTRVIEIIPERVGTYERHIELNVKDDKVQCDPSKDVLKAVVFERHHETGKAGYGFVKGFGIKRGAMAATVAHDAHNLLVIGTNDEDMALAANTLIECGGGMVAVQDGKVLGLVPLPIAGLMSNKPLEEMAEMVEKLDSAWKEIGCDIVSPFMTMALIPLACLPELRLTNRGLVDCNKFEFVSLFIEE.

This sequence belongs to the metallo-dependent hydrolases superfamily. Adenine deaminase family. Mn(2+) is required as a cofactor.

The enzyme catalyses adenine + H2O + H(+) = hypoxanthine + NH4(+). The polypeptide is Adenine deaminase (Clostridium botulinum (strain 657 / Type Ba4)).